A 272-amino-acid chain; its full sequence is Elongation factor Ts (272 aa).

An involved in Mg(2+) ion dislocation from EF-Tu region spans residues 76-79 (TDFV).

This sequence belongs to the EF-Ts family.

It localises to the cytoplasm. In terms of biological role, associates with the EF-Tu.GDP complex and induces the exchange of GDP to GTP. It remains bound to the aminoacyl-tRNA.EF-Tu.GTP complex up to the GTP hydrolysis stage on the ribosome. The polypeptide is Elongation factor Ts (Corynebacterium urealyticum (strain ATCC 43042 / DSM 7109)).